The sequence spans 344 residues: DNA-directed RNA polymerase subunit alpha (344 aa).

The tract at residues 1–238 (MKVIKTAPLI…KQLGVFGERP (238 aa)) is alpha N-terminal domain (alpha-NTD). The tract at residues 254-344 (AKDLSAKIES…EKLEDKGGND (91 aa)) is alpha C-terminal domain (alpha-CTD).

It belongs to the RNA polymerase alpha chain family. As to quaternary structure, homodimer. The RNAP catalytic core consists of 2 alpha, 1 beta, 1 beta' and 1 omega subunit. When a sigma factor is associated with the core the holoenzyme is formed, which can initiate transcription.

The enzyme catalyses RNA(n) + a ribonucleoside 5'-triphosphate = RNA(n+1) + diphosphate. In terms of biological role, DNA-dependent RNA polymerase catalyzes the transcription of DNA into RNA using the four ribonucleoside triphosphates as substrates. The polypeptide is DNA-directed RNA polymerase subunit alpha (Helicobacter pylori (strain J99 / ATCC 700824) (Campylobacter pylori J99)).